We begin with the raw amino-acid sequence, 380 residues long: 3-dehydroquinate synthase (380 aa).

Residues 118–122 (GVIGD), 142–143 (TS), Lys155, and Lys164 contribute to the NAD(+) site. Zn(2+) is bound by residues Glu197, His259, and His278.

The protein belongs to the sugar phosphate cyclases superfamily. Dehydroquinate synthase family. Requires Co(2+) as cofactor. Zn(2+) is required as a cofactor. NAD(+) serves as cofactor.

The protein resides in the cytoplasm. It carries out the reaction 7-phospho-2-dehydro-3-deoxy-D-arabino-heptonate = 3-dehydroquinate + phosphate. The protein operates within metabolic intermediate biosynthesis; chorismate biosynthesis; chorismate from D-erythrose 4-phosphate and phosphoenolpyruvate: step 2/7. Catalyzes the conversion of 3-deoxy-D-arabino-heptulosonate 7-phosphate (DAHP) to dehydroquinate (DHQ). The protein is 3-dehydroquinate synthase of Sinorhizobium medicae (strain WSM419) (Ensifer medicae).